A 595-amino-acid polypeptide reads, in one-letter code: Apolipoprotein N-acyltransferase 2 (595 aa).

Helical transmembrane passes span 30–50 (FLAF…FGFF), 63–83 (LFFH…HWII), 95–115 (VVAI…FPIF), 167–187 (AEIT…YTLF), and 210–230 (FITL…FLFK). A CN hydrolase domain is found at 241-555 (LNVLIVQPDA…AEALSETIDV (315 aa)). Glutamate 293 serves as the catalytic Proton acceptor. Lysine 372 is an active-site residue. The active-site Nucleophile is the cysteine 463. The chain crosses the membrane as a helical span at residues 569–589 (LIPWLMLFLTGIYYLNLLIGI).

This sequence belongs to the CN hydrolase family. Apolipoprotein N-acyltransferase subfamily.

It is found in the cell inner membrane. The catalysed reaction is N-terminal S-1,2-diacyl-sn-glyceryl-L-cysteinyl-[lipoprotein] + a glycerophospholipid = N-acyl-S-1,2-diacyl-sn-glyceryl-L-cysteinyl-[lipoprotein] + a 2-acyl-sn-glycero-3-phospholipid + H(+). It functions in the pathway protein modification; lipoprotein biosynthesis (N-acyl transfer). Catalyzes the phospholipid dependent N-acylation of the N-terminal cysteine of apolipoprotein, the last step in lipoprotein maturation. In Leptospira interrogans serogroup Icterohaemorrhagiae serovar Lai (strain 56601), this protein is Apolipoprotein N-acyltransferase 2.